Here is a 379-residue protein sequence, read N- to C-terminus: Homoserine O-succinyltransferase (379 aa).

The region spanning 51–360 (NAVLICHALS…DAPQGHDAFL (310 aa)) is the AB hydrolase-1 domain. Serine 157 acts as the Nucleophile in catalysis. Arginine 227 lines the substrate pocket. Catalysis depends on residues aspartate 323 and histidine 356. Aspartate 357 contacts substrate.

This sequence belongs to the AB hydrolase superfamily. MetX family. As to quaternary structure, homodimer.

It localises to the cytoplasm. It carries out the reaction L-homoserine + succinyl-CoA = O-succinyl-L-homoserine + CoA. The protein operates within amino-acid biosynthesis; L-methionine biosynthesis via de novo pathway; O-succinyl-L-homoserine from L-homoserine: step 1/1. In terms of biological role, transfers a succinyl group from succinyl-CoA to L-homoserine, forming succinyl-L-homoserine. The polypeptide is Homoserine O-succinyltransferase (Pseudomonas syringae pv. tomato (strain ATCC BAA-871 / DC3000)).